The following is a 688-amino-acid chain: Translation initiation factor IF-2 (688 aa).

2 stretches are compositionally biased toward basic and acidic residues: residues 53–62 (GKEKSEKTKE) and 86–95 (KRDDKNEKVN). A disordered region spans residues 53–100 (GKEKSEKTKEEDDEIETTAKNPIKESMNNKKSNKRDDKNEKVNTENAE). Positions 187 to 354 (KRSPIITVMG…MILLSSEILE (168 aa)) constitute a tr-type G domain. The interval 196-203 (GHVDHGKT) is G1. GTP is bound at residue 196–203 (GHVDHGKT). Residues 221-225 (GITQH) form a G2 region. The segment at 242–245 (DTPG) is G3. GTP contacts are provided by residues 242 to 246 (DTPGH) and 296 to 299 (NKID). A G4 region spans residues 296–299 (NKID). A G5 region spans residues 332-334 (SAH).

The protein belongs to the TRAFAC class translation factor GTPase superfamily. Classic translation factor GTPase family. IF-2 subfamily.

Its subcellular location is the cytoplasm. One of the essential components for the initiation of protein synthesis. Protects formylmethionyl-tRNA from spontaneous hydrolysis and promotes its binding to the 30S ribosomal subunits. Also involved in the hydrolysis of GTP during the formation of the 70S ribosomal complex. The polypeptide is Translation initiation factor IF-2 (Clostridium botulinum (strain Loch Maree / Type A3)).